Here is a 316-residue protein sequence, read N- to C-terminus: MYEWLNALPKAELHLHLEGTLEPELLFALAERNRIALPWNDVETLRKAYAFNNLQEFLDLYYAGADVLRSEQDFYDLTWAYLQKCKAQNVVHVEPFFDPQTHTDRGIPFEVVLAGIRAALRDGEKQLGIRHGLILSFLRHLSEEEAQKTLDQALPFRDAFVAVGLDSSEVGHPPRKFQRVFDRARSEGFLTVAHAGEEGPPEYIWEALDLLKVERIDHGVRAFEDERLMRRLIDEQIPLTVCPLSNTKLCVFDDMSQHTILDMLERGVKVTVNSDDPAYFGGYVTENFHALQQSLGMTEEQARRLAQNSLDARLVK.

Zn(2+)-binding residues include His-14, His-16, and His-194. Residue Glu-197 is the Proton donor of the active site. Asp-275 contacts Zn(2+). Asp-276 lines the substrate pocket.

It belongs to the metallo-dependent hydrolases superfamily. Adenosine and AMP deaminases family. Adenine deaminase type 2 subfamily. It depends on Zn(2+) as a cofactor.

The catalysed reaction is adenine + H2O + H(+) = hypoxanthine + NH4(+). In terms of biological role, catalyzes the hydrolytic deamination of adenine to hypoxanthine. Plays an important role in the purine salvage pathway and in nitrogen catabolism. The polypeptide is Adenine deaminase (Pseudomonas paraeruginosa (strain DSM 24068 / PA7) (Pseudomonas aeruginosa (strain PA7))).